Consider the following 470-residue polypeptide: Uronate isomerase (470 aa).

This sequence belongs to the metallo-dependent hydrolases superfamily. Uronate isomerase family.

It catalyses the reaction D-glucuronate = D-fructuronate. The enzyme catalyses aldehydo-D-galacturonate = keto-D-tagaturonate. Its pathway is carbohydrate metabolism; pentose and glucuronate interconversion. The polypeptide is Uronate isomerase (Escherichia coli O17:K52:H18 (strain UMN026 / ExPEC)).